Consider the following 217-residue polypeptide: Small ribosomal subunit protein uS3c (217 aa).

The KH type-2 domain occupies 39–109 (IRNFLRTKLI…RFRITITYIP (71 aa)).

Belongs to the universal ribosomal protein uS3 family. Part of the 30S ribosomal subunit.

The protein resides in the plastid. It is found in the chloroplast. This chain is Small ribosomal subunit protein uS3c (rps3), found in Chlorokybus atmophyticus (Soil alga).